A 432-amino-acid polypeptide reads, in one-letter code: Delta-aminolevulinic acid dehydratase, chloroplastic (432 aa).

The interval 84-113 is disordered; sequence AAPPVPAKPSAPEGTPAISPLVMPARPRRN. Residue K300 is the Schiff-base intermediate with substrate of the active site. Residues R310 and K322 each coordinate 5-aminolevulinate. E338 provides a ligand contact to Mg(2+). K353 functions as the Schiff-base intermediate with substrate in the catalytic mechanism. 2 residues coordinate 5-aminolevulinate: S379 and Y418.

It belongs to the ALAD family. In terms of assembly, homooctamer. Requires Mg(2+) as cofactor.

It is found in the plastid. The protein localises to the chloroplast. It carries out the reaction 2 5-aminolevulinate = porphobilinogen + 2 H2O + H(+). Its pathway is porphyrin-containing compound metabolism; protoporphyrin-IX biosynthesis; coproporphyrinogen-III from 5-aminolevulinate: step 1/4. In terms of biological role, catalyzes an early step in the biosynthesis of tetrapyrroles. Binds two molecules of 5-aminolevulinate per subunit, each at a distinct site, and catalyzes their condensation to form porphobilinogen. This chain is Delta-aminolevulinic acid dehydratase, chloroplastic (HEMB), found in Physcomitrium patens (Spreading-leaved earth moss).